Consider the following 157-residue polypeptide: Transcription elongation factor GreA (157 aa).

The protein belongs to the GreA/GreB family.

Necessary for efficient RNA polymerase transcription elongation past template-encoded arresting sites. The arresting sites in DNA have the property of trapping a certain fraction of elongating RNA polymerases that pass through, resulting in locked ternary complexes. Cleavage of the nascent transcript by cleavage factors such as GreA or GreB allows the resumption of elongation from the new 3'terminus. GreA releases sequences of 2 to 3 nucleotides. The chain is Transcription elongation factor GreA from Brucella anthropi (strain ATCC 49188 / DSM 6882 / CCUG 24695 / JCM 21032 / LMG 3331 / NBRC 15819 / NCTC 12168 / Alc 37) (Ochrobactrum anthropi).